The sequence spans 355 residues: Cyclic nucleotide-gated potassium channel RHE_CH03180 (355 aa).

Over 1 to 12 (MSAVPFSKISTP) the chain is Cytoplasmic. Residues 13–30 (LNALFATIGLLVVAALTT) traverse the membrane as a helical segment. At 31–38 (QGLTGQER) the chain is on the periplasmic side. The chain crosses the membrane as a helical span at residues 39-61 (LVFELLLAAIWLAYVLQLSGTLL). Topologically, residues 62–73 (SRRRRLSGEMTA) are cytoplasmic. A helical membrane pass occupies residues 74 to 93 (LVIDLLAVLVPAAAFLFVGS). A helical membrane pass occupies residues 94–111 (RDRDLYCAIWLLKPLRDS). Over 112–128 (TFFRLLAKVVANESRNL) the chain is Cytoplasmic. A helical transmembrane segment spans residues 129–149 (LGVTSVFGIVLFGAALAGYII). Over 150 to 160 (ERDVQPDKFGS) the chain is Periplasmic. Residues 161–179 (IPQAMWWAVVTLSTTGYGD) constitute an intramembrane region (pore-forming). The Selectivity filter signature appears at 174–179 (TTGYGD). The Periplasmic segment spans residues 180 to 184 (EIPQS). The chain crosses the membrane as a helical span at residues 185 to 209 (LAGRVLAGLVMMSGIGIFALWAGIL). The Cytoplasmic portion of the chain corresponds to 210–355 (ATGFYEEVRR…LERRGGPPKE (146 aa)). 3',5'-cyclic AMP is bound by residues 297–298 (GE), 307–308 (RS), and Arg348.

This sequence belongs to the potassium channel family. Homotetramer.

The protein localises to the cell membrane. Functionally, cyclic nucleotide-regulated potassium channel activated by cAMP. The chain is Cyclic nucleotide-gated potassium channel RHE_CH03180 from Rhizobium etli (strain ATCC 51251 / DSM 11541 / JCM 21823 / NBRC 15573 / CFN 42).